A 67-amino-acid polypeptide reads, in one-letter code: MLCLPVFIILLLLASPAASNPLEKRIQSDLIRAALEDADTKNDPRLLGLVTGACCAVLKFSFCCGKK.

The N-terminal stretch at 1–19 is a signal peptide; it reads MLCLPVFIILLLLASPAAS. Positions 20-45 are excised as a propeptide; sequence NPLEKRIQSDLIRAALEDADTKNDPR. Position 64 is a cysteine amide (Cys64).

The protein belongs to the conotoxin T superfamily. In terms of processing, contains 2 disulfide bonds that can be either 'C1-C3, C2-C4' or 'C1-C4, C2-C3', since these disulfide connectivities have been observed for conotoxins with cysteine framework V (for examples, see AC P0DQQ7 and AC P81755). Expressed by the venom duct.

The protein resides in the secreted. The sequence is that of Conotoxin ArMLCL-012 from Conus arenatus (Sand-dusted cone).